The chain runs to 576 residues: uncharacterized protein (576 aa).

The segment covering 241 to 261 (DNTKAPSPTNTAGSRELSTPA) has biased composition (polar residues). The disordered stretch occupies residues 241–270 (DNTKAPSPTNTAGSRELSTPAGSPGKASLP).

This is an uncharacterized protein from Bacillus subtilis (strain 168).